We begin with the raw amino-acid sequence, 468 residues long: Procollagen C-endopeptidase enhancer 1 (468 aa).

An N-terminal signal peptide occupies residues 1-24; it reads MLPAALTSLLGPFLLAWVLPLARG. Asparagine 28 carries N-linked (GlcNAc...) asparagine glycosylation. 4 cysteine pairs are disulfide-bonded: cysteine 36–cysteine 62, cysteine 89–cysteine 111, cysteine 158–cysteine 185, and cysteine 212–cysteine 235. CUB domains are found at residues 36–148 and 158–272; these read CGGD…YSGR and CGGR…YRTL. The residue at position 41 (threonine 41) is a Phosphothreonine. Serine 49 is subject to Phosphoserine. The disordered stretch occupies residues 271-341; the sequence is TLPRDAVEKE…VAPDAPSITC (71 aa). Residues 272–281 are compositionally biased toward basic and acidic residues; the sequence is LPRDAVEKES. 2 disulfides stabilise this stretch: cysteine 341–cysteine 409 and cysteine 356–cysteine 460. The region spanning 341 to 460 is the NTR domain; the sequence is CPKQYKRSGT…ILSNLSKRKC (120 aa). Asparagine 454 is a glycosylation site (N-linked (GlcNAc...) asparagine).

In terms of assembly, interacts with EFEMP2. As to expression, expressed at highest levels in collagen-rich tissues, especially tendon. Also expressed in cornea and sterna.

The protein resides in the secreted. Its function is as follows. Binds to the C-terminal propeptide of type I procollagen and enhances procollagen C-proteinase activity. This is Procollagen C-endopeptidase enhancer 1 (Pcolce) from Rattus norvegicus (Rat).